The primary structure comprises 1173 residues: DNA-directed RNA polymerase subunit beta (1173 aa).

Belongs to the RNA polymerase beta chain family. The RNAP catalytic core consists of 2 alpha, 1 beta, 1 beta' and 1 omega subunit. When a sigma factor is associated with the core the holoenzyme is formed, which can initiate transcription.

It catalyses the reaction RNA(n) + a ribonucleoside 5'-triphosphate = RNA(n+1) + diphosphate. DNA-dependent RNA polymerase catalyzes the transcription of DNA into RNA using the four ribonucleoside triphosphates as substrates. This Kosmotoga olearia (strain ATCC BAA-1733 / DSM 21960 / TBF 19.5.1) protein is DNA-directed RNA polymerase subunit beta.